The sequence spans 332 residues: uncharacterized protein (332 aa).

The interval 159–256 (PLEISGRGGN…PRPHPWGPGP (98 aa)) is disordered. Over residues 201 to 231 (RPPSPRPPSPRPPHPRPPSPRPPHPRPPSPR) the composition is skewed to pro residues.

It is found in the virion. This is an uncharacterized protein from Acanthamoeba polyphaga (Amoeba).